Here is a 373-residue protein sequence, read N- to C-terminus: 3 beta-hydroxysteroid dehydrogenase/Delta 5--&gt;4-isomerase type 1 (373 aa).

Residues 10–15 (GAGGFL), tyrosine 155, and lysine 159 each bind NADP(+). The Proton donor role is filled by lysine 159. The chain crosses the membrane as a helical span at residues 288–308 (LSLMYWIGFLLEIVSFLLRPI).

Belongs to the 3-beta-HSD family. As to expression, placenta and skin. Predominantly expressed in mammary gland tissue.

It is found in the endoplasmic reticulum membrane. The protein localises to the mitochondrion membrane. It carries out the reaction a 3beta-hydroxy-Delta(5)-steroid + NAD(+) = a 3-oxo-Delta(5)-steroid + NADH + H(+). The enzyme catalyses pregnenolone + NAD(+) = pregn-5-ene-3,20-dione + NADH + H(+). It catalyses the reaction 3beta-hydroxyandrost-5-en-17-one + NAD(+) = androst-5-ene-3,17-dione + NADH + H(+). The catalysed reaction is androst-5-en-3beta,17beta-diol + NAD(+) = 17beta-hydroxy-androst-5-en-3-one + NADH + H(+). It carries out the reaction a 3beta-hydroxysteroid + NADP(+) = a 3-oxosteroid + NADPH + H(+). The enzyme catalyses 5alpha-androstane-3beta,17beta-diol + NADP(+) = 17beta-hydroxy-5alpha-androstan-3-one + NADPH + H(+). It catalyses the reaction 3beta-hydroxy-5alpha-androstan-17-one + NADP(+) = 5alpha-androstan-3,17-dione + NADPH + H(+). The catalysed reaction is a 3-oxo-Delta(5)-steroid = a 3-oxo-Delta(4)-steroid. It carries out the reaction pregn-5-ene-3,20-dione = progesterone. The enzyme catalyses androst-5-ene-3,17-dione = androst-4-ene-3,17-dione. It catalyses the reaction 17beta-hydroxy-androst-5-en-3-one = testosterone. The catalysed reaction is 5alpha-androstane-3beta,17beta-diol + NAD(+) = 17beta-hydroxy-5alpha-androstan-3-one + NADH + H(+). It functions in the pathway steroid hormone biosynthesis. The protein operates within steroid metabolism. Functionally, a bifunctional enzyme responsible for the oxidation and isomerization of 3beta-hydroxy-Delta(5)-steroid precursors to 3-oxo-Delta(4)-steroids, an essential step in steroid hormone biosynthesis. Specifically catalyzes the conversion of pregnenolone to progesterone, 17alpha-hydroxypregnenolone to 17alpha-hydroxyprogesterone, dehydroepiandrosterone (DHEA) to 4-androstenedione, and androstenediol to testosterone. Additionally, catalyzes the interconversion between 3beta-hydroxy and 3-oxo-5alpha-androstane steroids controlling the bioavalability of the active forms. Specifically converts dihydrotestosterone to its inactive form 5alpha-androstanediol, that does not bind androgen receptor/AR. Also converts androstanedione, a precursor of testosterone and estrone, to epiandrosterone. Expected to use NAD(+) as preferred electron donor for the 3beta-hydroxy-steroid dehydrogenase activity and NADPH for the 3-ketosteroid reductase activity. This Homo sapiens (Human) protein is 3 beta-hydroxysteroid dehydrogenase/Delta 5--&gt;4-isomerase type 1.